A 229-amino-acid chain; its full sequence is Stage III sporulation protein AG (229 aa).

A helical membrane pass occupies residues 30–50 (YHYFLFVFVLGVSFMLVSQLF). Disordered stretches follow at residues 64–93 (AVSSQHSADSKEKTAEVFKASKSDKPKDSI) and 136–159 (SNKNTTTEETDKEGGKRSVTDQSS). Over residues 71-93 (ADSKEKTAEVFKASKSDKPKDSI) the composition is skewed to basic and acidic residues.

Its subcellular location is the cell membrane. The polypeptide is Stage III sporulation protein AG (spoIIIAG) (Bacillus subtilis (strain 168)).